We begin with the raw amino-acid sequence, 591 residues long: V-type ATP synthase alpha chain (591 aa).

Residue 233–240 coordinates ATP; that stretch reads GPFGAGKT.

Belongs to the ATPase alpha/beta chains family.

The enzyme catalyses ATP + H2O + 4 H(+)(in) = ADP + phosphate + 5 H(+)(out). In terms of biological role, produces ATP from ADP in the presence of a proton gradient across the membrane. The V-type alpha chain is a catalytic subunit. The chain is V-type ATP synthase alpha chain from Streptococcus pyogenes serotype M49 (strain NZ131).